A 159-amino-acid chain; its full sequence is MAHTRGISGLVGKLVMETEVNCNADKYYQIYKHHEDLPSAIPHIVTSAKAVEGHGTTSGCVKEWGYMHEGKTLTCKEKTTYNDETRTICHSISEGDLMNDYKKFDATLVVDPKDNGHGSIVKYILDYEKINEDSPVPIHYLALCNQATEDLNTYLCASV.

Belongs to the MLP family. Laticifer.

The protein localises to the vacuole. Its subcellular location is the cytoplasmic vesicle. Its function is as follows. Not known; MLPs constitute up to 50% of the soluble latex protein. The protein is Major latex protein 149 (MLP149) of Papaver somniferum (Opium poppy).